A 412-amino-acid chain; its full sequence is Serine hydroxymethyltransferase (412 aa).

Residues leucine 117 and 121–123 contribute to the (6S)-5,6,7,8-tetrahydrofolate site; that span reads GHL. Position 226 is an N6-(pyridoxal phosphate)lysine (lysine 226). 349–351 contacts (6S)-5,6,7,8-tetrahydrofolate; the sequence is SPF.

Belongs to the SHMT family. In terms of assembly, homodimer. The cofactor is pyridoxal 5'-phosphate.

The protein localises to the cytoplasm. It carries out the reaction (6R)-5,10-methylene-5,6,7,8-tetrahydrofolate + glycine + H2O = (6S)-5,6,7,8-tetrahydrofolate + L-serine. The protein operates within one-carbon metabolism; tetrahydrofolate interconversion. It functions in the pathway amino-acid biosynthesis; glycine biosynthesis; glycine from L-serine: step 1/1. Its function is as follows. Catalyzes the reversible interconversion of serine and glycine with tetrahydrofolate (THF) serving as the one-carbon carrier. This reaction serves as the major source of one-carbon groups required for the biosynthesis of purines, thymidylate, methionine, and other important biomolecules. Also exhibits THF-independent aldolase activity toward beta-hydroxyamino acids, producing glycine and aldehydes, via a retro-aldol mechanism. The protein is Serine hydroxymethyltransferase of Geobacillus thermodenitrificans (strain NG80-2).